Here is a 396-residue protein sequence, read N- to C-terminus: Probable sugar efflux transporter (396 aa).

A run of 12 helical transmembrane segments spans residues V15–L35, V50–L70, L81–F101, V103–A123, A136–L156, F170–L190, P209–Y229, F246–G266, T275–A295, I299–M319, V333–G353, and M364–F384.

Belongs to the major facilitator superfamily. SotB (TC 2.A.1.2) family.

It is found in the cell inner membrane. In terms of biological role, involved in the efflux of sugars. The physiological role may be the reduction of the intracellular concentration of toxic sugars or sugar metabolites. The protein is Probable sugar efflux transporter of Escherichia coli (strain SMS-3-5 / SECEC).